The sequence spans 149 residues: Arginine repressor (149 aa).

The protein belongs to the ArgR family.

The protein resides in the cytoplasm. Its pathway is amino-acid biosynthesis; L-arginine biosynthesis [regulation]. Functionally, regulates arginine biosynthesis genes. This Listeria monocytogenes serotype 4b (strain F2365) protein is Arginine repressor.